The following is a 58-amino-acid chain: uncharacterized protein (58 aa).

Residues 18 to 38 form a helical membrane-spanning segment; that stretch reads WLMIVLLFCSTGMVFLATILE.

Its subcellular location is the membrane. This is an uncharacterized protein from Saccharomyces cerevisiae (strain ATCC 204508 / S288c) (Baker's yeast).